Here is a 653-residue protein sequence, read N- to C-terminus: MRSFLLASLASLSVISVYGHPHARSTLTRRGVDLDSYRMKHAATYKNVAEVVADHNINTLAKRASAQDIATDLVKATIPNATFRLVSDSYVSDNGVAHFYFKQTANGLDIDTADFNVNIGRDGNVFSFGNSFYKGDVPAPPSLTKRDGSEPVAALKSAVDVLALPVSAQSATAEPKDATETYAIKKTTGTVSEPEARLVYLVDDEGKLALTWRVETDIMSNWLLSYVDVKDGSKVHAVVDYSADATYNVYPWGINDPTEGERQLVTDGFYPPASEFGWHNDGKMAFKTTRGNNGIAHTNWDNKMSGFLDLPRPTSEDLNFDYPFSLNQTDFHDYGNASITQLFYTSNKYHDLLYTLGFNEKAGNFEINNNGAGGVGQDFVYLNAQDGERFNNANFATPPDGSPARMRMYIWNQTTPFRDCSFEAGVVIHEYTHGLSNRLTGGPANSGCLSMLESGGMGEGWSDFFATAIRLKPSDTRAKDYTMGEWISGSEFGIRNYKYSTNLEVNPQVYTDVDQYTRVHPIGNIWASMLYEVLWNLIDKYGKNDDWLPEFNSAGVPKDGKYLAMKLALDGMALQPCNPTFVSARDAIIDADKALTGGANLCEIWSGFAKRGLGEKAVYSTGGRTNSFDVPAGVCNNSTVSSQARRVKLPLSV.

An N-terminal signal peptide occupies residues 1–19; that stretch reads MRSFLLASLASLSVISVYG. Positions 20-244 are excised as a propeptide; it reads HPHARSTLTR…VHAVVDYSAD (225 aa). 3 N-linked (GlcNAc...) asparagine glycosylation sites follow: Asn-327, Asn-336, and Asn-412. Residue His-429 coordinates Zn(2+). Glu-430 is an active-site residue. Residue His-433 coordinates Zn(2+). 2 N-linked (GlcNAc...) asparagine glycosylation sites follow: Asn-636 and Asn-637.

This sequence belongs to the peptidase M36 family. Zn(2+) serves as cofactor.

Its subcellular location is the secreted. Secreted metalloproteinase that allows assimilation of proteinaceous substrates. This Pyrenophora tritici-repentis (strain Pt-1C-BFP) (Wheat tan spot fungus) protein is Extracellular metalloproteinase (MEP).